Consider the following 122-residue polypeptide: Small ribosomal subunit protein uS13 (122 aa).

The tract at residues Asn-95–Lys-122 is disordered.

It belongs to the universal ribosomal protein uS13 family. As to quaternary structure, part of the 30S ribosomal subunit. Forms a loose heterodimer with protein S19. Forms two bridges to the 50S subunit in the 70S ribosome.

Located at the top of the head of the 30S subunit, it contacts several helices of the 16S rRNA. In the 70S ribosome it contacts the 23S rRNA (bridge B1a) and protein L5 of the 50S subunit (bridge B1b), connecting the 2 subunits; these bridges are implicated in subunit movement. Contacts the tRNAs in the A and P-sites. This is Small ribosomal subunit protein uS13 from Methylobacterium sp. (strain 4-46).